The following is a 95-amino-acid chain: Aspartyl/glutamyl-tRNA(Asn/Gln) amidotransferase subunit C (95 aa).

The protein belongs to the GatC family. Heterotrimer of A, B and C subunits.

It carries out the reaction L-glutamyl-tRNA(Gln) + L-glutamine + ATP + H2O = L-glutaminyl-tRNA(Gln) + L-glutamate + ADP + phosphate + H(+). The catalysed reaction is L-aspartyl-tRNA(Asn) + L-glutamine + ATP + H2O = L-asparaginyl-tRNA(Asn) + L-glutamate + ADP + phosphate + 2 H(+). Its function is as follows. Allows the formation of correctly charged Asn-tRNA(Asn) or Gln-tRNA(Gln) through the transamidation of misacylated Asp-tRNA(Asn) or Glu-tRNA(Gln) in organisms which lack either or both of asparaginyl-tRNA or glutaminyl-tRNA synthetases. The reaction takes place in the presence of glutamine and ATP through an activated phospho-Asp-tRNA(Asn) or phospho-Glu-tRNA(Gln). This is Aspartyl/glutamyl-tRNA(Asn/Gln) amidotransferase subunit C from Bartonella henselae (strain ATCC 49882 / DSM 28221 / CCUG 30454 / Houston 1) (Rochalimaea henselae).